The primary structure comprises 478 residues: Microfibrillar-associated protein 1 (478 aa).

The span at 1-20 (MSAATAAAAASGIQSTAGAI) shows a compositional bias: low complexity. Disordered stretches follow at residues 1–276 (MSAA…RRAT) and 456–478 (NEHA…KKME). A compositionally biased stretch (acidic residues) spans 53–62 (SSEESDDDDF). Residues 107–128 (DDPRLRRLRQRPVDMEDMERER) show a composition bias toward basic and acidic residues. Acidic residues predominate over residues 140 to 153 (IMESDSEDEEEDEG). Polar residues predominate over residues 160–170 (RGTNKITLASE). Over residues 171–181 (SDTDAELSDTE) the composition is skewed to acidic residues. Over residues 197 to 212 (QREEEVLQKEDEKQSE) the composition is skewed to basic and acidic residues. A compositionally biased stretch (acidic residues) spans 214-231 (SESESSEYEEETESEEDN). An interaction with Prp38 region spans residues 229–478 (EDNEPRLKPL…PTGSKRKKME (250 aa)). The segment covering 245 to 268 (RATIQEKEREAQKQKQLEAEAKRA) has biased composition (basic and acidic residues).

This sequence belongs to the MFAP1 family. In terms of assembly, component of the spliceosome B complex. Interacts (via C-terminus) with Prp38.

It is found in the nucleus. Its function is as follows. Required for pre-mRNA splicing. This Drosophila melanogaster (Fruit fly) protein is Microfibrillar-associated protein 1.